Here is a 327-residue protein sequence, read N- to C-terminus: GMP reductase (327 aa).

The active-site Thioimidate intermediate is the Cys176. 205–228 (IIADGGIRTHGDIAKSIRFGATMV) provides a ligand contact to NADP(+).

It belongs to the IMPDH/GMPR family. GuaC type 2 subfamily.

It carries out the reaction IMP + NH4(+) + NADP(+) = GMP + NADPH + 2 H(+). Its function is as follows. Catalyzes the irreversible NADPH-dependent deamination of GMP to IMP. It functions in the conversion of nucleobase, nucleoside and nucleotide derivatives of G to A nucleotides, and in maintaining the intracellular balance of A and G nucleotides. This Streptococcus equi subsp. equi (strain 4047) protein is GMP reductase.